Reading from the N-terminus, the 447-residue chain is MAELLYLKEAEQVVTVAGASDKPKVGEDLSEIGVIERGSVIVEGEKIAFAGTDADARHYLQKRSGKVKTIEATGKILTPGLVDPHTHLVFAGSREQELTMRLKGKSYMSILQAGGGILSTTKSTRAATADQLAHESRLRLDRFLQHGVTTVEAKSGYGLATDAELKQLRVAQQLNNDHPVDVVSTFMGAHAIPPEWKQDPNGFVQLVAEEMIPQVAAENLAEFCDVFCEEGVFTVAQSQYILEEGKKHGLKPKIHADELVSFGGAELAAKVGAVSADHLLKASPTGIEQMAEAGVIAVLLPGTAFFLMTEPANARAMIEAGVPVALSTDRNPGSSPTESLPFIMNLACLTMKMTPEEVLAASTINAAHAIGRAKDIGSIEAGKNADLVLFDAPNYQTLQYNYAVNRVDTVMKAGKIVVEGGVLLEKTDNQRCSLATEDRGTRPIWQK.

Histidine 85 and histidine 87 together coordinate Fe(3+). Zn(2+) is bound by residues histidine 85 and histidine 87. The 4-imidazolone-5-propanoate site is built by arginine 94, tyrosine 157, and histidine 190. An N-formimidoyl-L-glutamate-binding site is contributed by tyrosine 157. Histidine 255 lines the Fe(3+) pocket. Position 255 (histidine 255) interacts with Zn(2+). A 4-imidazolone-5-propanoate-binding site is contributed by glutamate 258. Aspartate 329 is a binding site for Fe(3+). Aspartate 329 serves as a coordination point for Zn(2+). N-formimidoyl-L-glutamate is bound by residues asparagine 331 and glycine 333. Serine 334 contacts 4-imidazolone-5-propanoate.

The protein belongs to the metallo-dependent hydrolases superfamily. HutI family. Requires Zn(2+) as cofactor. The cofactor is Fe(3+).

The protein localises to the cytoplasm. The enzyme catalyses 4-imidazolone-5-propanoate + H2O = N-formimidoyl-L-glutamate. The protein operates within amino-acid degradation; L-histidine degradation into L-glutamate; N-formimidoyl-L-glutamate from L-histidine: step 3/3. Catalyzes the hydrolytic cleavage of the carbon-nitrogen bond in imidazolone-5-propanoate to yield N-formimidoyl-L-glutamate. It is the third step in the universal histidine degradation pathway. This Shouchella clausii (strain KSM-K16) (Alkalihalobacillus clausii) protein is Imidazolonepropionase.